The following is a 149-amino-acid chain: Probable cyclic pyranopterin monophosphate synthase (149 aa).

Substrate is bound by residues 67–69 (LCH) and 103–104 (ME). D118 is an active-site residue.

The protein belongs to the MoaC family. As to quaternary structure, homohexamer; trimer of dimers.

The enzyme catalyses (8S)-3',8-cyclo-7,8-dihydroguanosine 5'-triphosphate = cyclic pyranopterin phosphate + diphosphate. It participates in cofactor biosynthesis; molybdopterin biosynthesis. Its function is as follows. Catalyzes the conversion of (8S)-3',8-cyclo-7,8-dihydroguanosine 5'-triphosphate to cyclic pyranopterin monophosphate (cPMP). The sequence is that of Probable cyclic pyranopterin monophosphate synthase from Saccharolobus solfataricus (strain ATCC 35092 / DSM 1617 / JCM 11322 / P2) (Sulfolobus solfataricus).